Consider the following 931-residue polypeptide: Netrin receptor UNC5C (931 aa).

A signal peptide spans M1–A40. The Extracellular portion of the chain corresponds to Q41–Y380. Residues P62–Y159 form the Ig-like domain. Intrachain disulfides connect C83-C144, C95-C142, C188-C239, C272-C309, C276-C313, C287-C299, C328-C362, C332-C367, and C340-C352. One can recognise an Ig-like C2-type domain in the interval R161–I256. A glycan (N-linked (GlcNAc...) asparagine) is linked at N236. 2 consecutive TSP type-1 domains span residues N260–P314 and D316–M368. The N-linked (GlcNAc...) asparagine glycan is linked to N361. A helical membrane pass occupies residues V381–V401. Residues Y402 to Y931 lie on the Cytoplasmic side of the membrane. The segment at Y402–Y931 is required for netrin-mediated axon repulsion of neuronal growth cones. Residue S502 is modified to Phosphoserine. Residues C530–S673 enclose the ZU5 domain. A Phosphotyrosine modification is found at Y568. The interaction with DCC stretch occupies residues S694 to K712. The Death domain maps to Q850–G929.

This sequence belongs to the unc-5 family. Interacts with DCC (via cytoplasmic domain). Interacts (tyrosine phosphorylated form) with PTPN11. Interacts (via extracellular domain) with FLRT3 (via extracellular domain). Interacts (via Ig-like C2-type domain) with DSCAM (via extracellular domain). Interacts (via death domain) with DAPK1. Interacts (via cytoplasmic domain) with TUBB3; this interaction is decreased by NTN1/Netrin-1. Proteolytically cleaved by caspases during apoptosis. The cleavage does not take place when the receptor is associated with netrin ligand. Its cleavage by caspases is required to induce apoptosis. In terms of processing, phosphorylated on different cytoplasmic tyrosine residues. Phosphorylation of Tyr-568 leads to an interaction with PTPN11 phosphatase, suggesting that its activity is regulated by phosphorylation/dephosphorylation. Tyrosine phosphorylation is netrin-dependent. In terms of tissue distribution, mainly expressed in brain. Expressed in temporal lobe cortical neurons and in neurons of the hippocampal pyramidal layer. Also expressed in kidney. Not expressed in developing or adult lung.

Its subcellular location is the cell membrane. The protein localises to the cell surface. It localises to the synapse. It is found in the synaptosome. The protein resides in the cell projection. Its subcellular location is the axon. The protein localises to the dendrite. It localises to the growth cone. It is found in the lamellipodium. The protein resides in the filopodium. Its function is as follows. Receptor for netrin required for axon guidance. Mediates axon repulsion of neuronal growth cones in the developing nervous system upon ligand binding. NTN1/Netrin-1 binding might cause dissociation of UNC5C from polymerized TUBB3 in microtubules and thereby lead to increased microtubule dynamics and axon repulsion. Axon repulsion in growth cones may also be caused by its association with DCC that may trigger signaling for repulsion. Might also collaborate with DSCAM in NTN1-mediated axon repulsion independently of DCC. Also involved in corticospinal tract axon guidance independently of DCC. Involved in dorsal root ganglion axon projection towards the spinal cord. It also acts as a dependence receptor required for apoptosis induction when not associated with netrin ligand. The chain is Netrin receptor UNC5C (UNC5C) from Homo sapiens (Human).